A 451-amino-acid chain; its full sequence is MGRRYFGTDGIRGTVGDAPITPDFVLRLGYAAGKVLAGTADVAPGARPTVLIGKDTRVSGYMLEAALEAGFSAAGVDVMLAGPMPTPGVAYLTRALRLSAGVVISASHNPYPDNGIKFFSADGNKLPDDTEAAIEAWLDKPLECAPSDGLGKARRLDDAAGRYIEFCKSTFPAAFDLRGLKLVVDCAHGAAYQVAPHVFHELGADVIPIGVAPNGFNINDGVGATAPDALMRAVRANRADLGIALDGDADRLQIVDASGRLYNGDELLYVLVQDRIATDGKVEGAVGTLMTNLAVEVALQRAGVQFVRAAVGDRYVLEKLREHGWQLGAEGSGHILSLDRHSTGDGIVSALLVLAALKRSGKTLAQMLDGVTLFPQKLINVRMKPGADWKDSASIRAAIETAEAALAGSGRVLIRASGTEPVLRVMVEAQQAADATRHAEAIAEAVRAATA.

The active-site Phosphoserine intermediate is the serine 107. Mg(2+) is bound by residues serine 107, aspartate 246, aspartate 248, and aspartate 250. Phosphoserine is present on serine 107.

Belongs to the phosphohexose mutase family. Requires Mg(2+) as cofactor. Post-translationally, activated by phosphorylation.

It catalyses the reaction alpha-D-glucosamine 1-phosphate = D-glucosamine 6-phosphate. Functionally, catalyzes the conversion of glucosamine-6-phosphate to glucosamine-1-phosphate. In Burkholderia multivorans (strain ATCC 17616 / 249), this protein is Phosphoglucosamine mutase.